The sequence spans 346 residues: UPF0065 protein in the TAR-I ttuE-ttuC' intergenic region (346 aa).

Positions 1-46 are cleaved as a signal peptide; it reads MQASMLDSQWRLTIFSPRRKVKVSQMNSRFIAVLLTATILPWVAQA.

It belongs to the UPF0065 (bug) family.

The protein localises to the periplasm. The polypeptide is UPF0065 protein in the TAR-I ttuE-ttuC' intergenic region (Agrobacterium vitis (Rhizobium vitis)).